The primary structure comprises 78 residues: HssA/B-like protein 29 (78 aa).

The tract at residues 1–31 (MTLFSSITSISKTNTSSKSSLNSFSGSSLSM) is disordered.

Belongs to the hssA/B family.

The chain is HssA/B-like protein 29 (hssl29) from Dictyostelium discoideum (Social amoeba).